A 505-amino-acid chain; its full sequence is Histidine ammonia-lyase (505 aa).

Positions 141–143 (ASG) form a cross-link, 5-imidazolinone (Ala-Gly). At serine 142 the chain carries 2,3-didehydroalanine (Ser).

The protein belongs to the PAL/histidase family. Post-translationally, contains an active site 4-methylidene-imidazol-5-one (MIO), which is formed autocatalytically by cyclization and dehydration of residues Ala-Ser-Gly.

It is found in the cytoplasm. It carries out the reaction L-histidine = trans-urocanate + NH4(+). It functions in the pathway amino-acid degradation; L-histidine degradation into L-glutamate; N-formimidoyl-L-glutamate from L-histidine: step 1/3. This Bacillus cytotoxicus (strain DSM 22905 / CIP 110041 / 391-98 / NVH 391-98) protein is Histidine ammonia-lyase.